A 586-amino-acid polypeptide reads, in one-letter code: Putative Lon protease homolog (586 aa).

Positions 346–543 constitute a Lon proteolytic domain; that stretch reads GERIGQINAL…TDALPLLLNL (198 aa). Active-site residues include Ser438 and Lys481.

The protein belongs to the peptidase S16 family.

The chain is Putative Lon protease homolog (ycbZ) from Escherichia coli (strain K12).